The primary structure comprises 291 residues: ATP synthase gamma chain (291 aa).

It belongs to the ATPase gamma chain family. In terms of assembly, F-type ATPases have 2 components, CF(1) - the catalytic core - and CF(0) - the membrane proton channel. CF(1) has five subunits: alpha(3), beta(3), gamma(1), delta(1), epsilon(1). CF(0) has three main subunits: a, b and c.

It localises to the cell inner membrane. Functionally, produces ATP from ADP in the presence of a proton gradient across the membrane. The gamma chain is believed to be important in regulating ATPase activity and the flow of protons through the CF(0) complex. In Neisseria meningitidis serogroup C / serotype 2a (strain ATCC 700532 / DSM 15464 / FAM18), this protein is ATP synthase gamma chain.